The chain runs to 320 residues: Lipoyl synthase (320 aa).

The segment at 1-29 (MVTVVDRVTNRRLRHPEKAHRPDTSVQKK) is disordered. Residues 19 to 29 (AHRPDTSVQKK) show a composition bias toward basic and acidic residues. The [4Fe-4S] cluster site is built by cysteine 59, cysteine 64, cysteine 70, cysteine 85, cysteine 89, cysteine 92, and serine 298. A Radical SAM core domain is found at 71 to 287 (WSQRHASFMI…AKIGKVKGFL (217 aa)).

It belongs to the radical SAM superfamily. Lipoyl synthase family. [4Fe-4S] cluster is required as a cofactor.

The protein resides in the cytoplasm. It carries out the reaction [[Fe-S] cluster scaffold protein carrying a second [4Fe-4S](2+) cluster] + N(6)-octanoyl-L-lysyl-[protein] + 2 oxidized [2Fe-2S]-[ferredoxin] + 2 S-adenosyl-L-methionine + 4 H(+) = [[Fe-S] cluster scaffold protein] + N(6)-[(R)-dihydrolipoyl]-L-lysyl-[protein] + 4 Fe(3+) + 2 hydrogen sulfide + 2 5'-deoxyadenosine + 2 L-methionine + 2 reduced [2Fe-2S]-[ferredoxin]. Its pathway is protein modification; protein lipoylation via endogenous pathway; protein N(6)-(lipoyl)lysine from octanoyl-[acyl-carrier-protein]: step 2/2. Its function is as follows. Catalyzes the radical-mediated insertion of two sulfur atoms into the C-6 and C-8 positions of the octanoyl moiety bound to the lipoyl domains of lipoate-dependent enzymes, thereby converting the octanoylated domains into lipoylated derivatives. The polypeptide is Lipoyl synthase (Bartonella tribocorum (strain CIP 105476 / IBS 506)).